The chain runs to 182 residues: Large ribosomal subunit protein uL16 (182 aa).

This sequence belongs to the universal ribosomal protein uL16 family.

This Pyrobaculum islandicum (strain DSM 4184 / JCM 9189 / GEO3) protein is Large ribosomal subunit protein uL16.